Here is a 357-residue protein sequence, read N- to C-terminus: Uroporphyrinogen decarboxylase (357 aa).

Substrate-binding positions include arginine 27–arginine 31, aspartate 77, tyrosine 154, serine 209, and histidine 330.

It belongs to the uroporphyrinogen decarboxylase family. Homodimer.

The protein resides in the cytoplasm. The enzyme catalyses uroporphyrinogen III + 4 H(+) = coproporphyrinogen III + 4 CO2. It participates in porphyrin-containing compound metabolism; protoporphyrin-IX biosynthesis; coproporphyrinogen-III from 5-aminolevulinate: step 4/4. Its function is as follows. Catalyzes the decarboxylation of four acetate groups of uroporphyrinogen-III to yield coproporphyrinogen-III. The polypeptide is Uroporphyrinogen decarboxylase (Acinetobacter baumannii (strain ACICU)).